The sequence spans 535 residues: Sodium/hydrogen exchanger 9B2 (535 aa).

Basic and acidic residues predominate over residues 1 to 14 (MRNQDKRAAHKDSE). The tract at residues 1–70 (MRNQDKRAAH…TPAEPNHLQR (70 aa)) is disordered. The Cytoplasmic segment spans residues 1-85 (MRNQDKRAAH…ACPPRGLLAR (85 aa)). 2 stretches are compositionally biased toward polar residues: residues 16-34 (STEVNHTASSYQGRQQETG) and 46-58 (TEGSNLLNNNEKM). Residues 86 to 103 (VITNVTMVILLWAVVWSV) form a helical membrane-spanning segment. Residues 104–112 (TGSECLPGG) are Extracellular-facing. The helical transmembrane segment at 113–132 (NLFGIIMLFYCAIIGGKLFG) threads the bilayer. Topologically, residues 133–143 (LIKLPTLPPLP) are cytoplasmic. The helical transmembrane segment at 144-160 (PLLGMLLAGFLIRNVPV) threads the bilayer. Over 161 to 170 (ISDNIQIKHK) the chain is Extracellular. Residues 171-188 (WSSALRSIALSVILVRAG) traverse the membrane as a helical segment. The Cytoplasmic portion of the chain corresponds to 189-199 (LGLDSNALKKL). The helical transmembrane segment at 200–226 (KGVCVRLSLGPCLIEACTSAVLAYFLM) threads the bilayer. Over 227-232 (GLPWQW) the chain is Extracellular. A helical transmembrane segment spans residues 233-241 (GFMLGFVLG). Residues 242–269 (AVSPAVVVPSMLLLQEGGYGVEKGIPTL) lie on the Cytoplasmic side of the membrane. Positions 243, 274, 277, and 278 each coordinate Na(+). A helical transmembrane segment spans residues 270-289 (LMAAGSFDDILAITGFNTCL). Over 290-299 (GMAFSTGSTV) the chain is Extracellular. Residues 300–323 (FNVLKGVLEVIIGVVTGLVLGFFI) traverse the membrane as a helical segment. Residues 324 to 338 (QYFPSSDQDNLVWKR) lie on the Cytoplasmic side of the membrane. Residues 339–356 (AFLVLGLSVLAVFSSTYF) form a helical membrane-spanning segment. Residues 357 to 360 (GFPG) are Extracellular-facing. Residues 361–372 (SGGLCTLVTAFL) form a helical membrane-spanning segment. The Cytoplasmic portion of the chain corresponds to 373-389 (AGRGWASTKTDVEKVIA). The helical transmembrane segment at 390–410 (VAWDIFQPLLFGLIGAEVLIT) threads the bilayer. Over 411–416 (ALRPET) the chain is Extracellular. The helical transmembrane segment at 417 to 439 (IGLCVATLGIAVLIRILVTYLMV) threads the bilayer. The Cytoplasmic portion of the chain corresponds to 440-460 (CFAGFNIKEKIFISFAWLPKA). The helical transmembrane segment at 461–472 (TVQAAIGSVALD) threads the bilayer. Topologically, residues 473 to 485 (TARSHGEKQLEGY) are extracellular. Residues 486-508 (GMDVLTVAFLSIIITAPVGSLLI) form a helical membrane-spanning segment. At 509-535 (GLLGPRLLQKAEQNKDEEDQGETSIQV) the chain is on the cytoplasmic side.

It belongs to the monovalent cation:proton antiporter 1 (CPA1) transporter (TC 2.A.36) family. Homodimer; dimerization is essential for SLC9B2 activity. Lipids seem to play a role in the stabilization of the dimerization subdomain.

Its subcellular location is the cell membrane. It localises to the mitochondrion membrane. The protein localises to the endosome membrane. The protein resides in the recycling endosome membrane. It is found in the lysosome membrane. Its subcellular location is the cytoplasmic vesicle. It localises to the secretory vesicle. The protein localises to the synaptic vesicle membrane. The protein resides in the cell projection. It is found in the cilium. Its subcellular location is the flagellum membrane. It localises to the basolateral cell membrane. The protein localises to the apical cell membrane. The catalysed reaction is Li(+)(out) + H(+)(in) = Li(+)(in) + H(+)(out). It catalyses the reaction Li(+)(in) + Na(+)(out) = Li(+)(out) + Na(+)(in). The enzyme catalyses Na(+)(in) + H(+)(out) = Na(+)(out) + H(+)(in). Allosterically inhibited by the N-terminal domain. Inhibited by phloretin. Electroneutral Na(+) Li(+)/H(+) antiporter that extrudes Na(+) or Li(+) in exchange for external protons across the membrane. Uses the proton gradient/membrane potential to extrude sodium. Contributes to the regulation of intracellular pH and sodium homeostasis. Also able to mediate Na(+)/Li(+) antiporter activity in kidney. May play a physiological role in renal tubular function and blood pressure homeostasis. Plays an important role for insulin secretion and clathrin-mediated endocytosis in beta-cells. Involved in sperm motility and fertility. It is controversial whether SLC9B2 plays a role in osteoclast differentiation or not. The chain is Sodium/hydrogen exchanger 9B2 (SLC9B2) from Bison bison bison (North American plains bison).